A 22-amino-acid chain; its full sequence is Brevinin-1OKa (22 aa).

At Lys22 the chain carries Lysine amide.

As to expression, expressed by the skin glands.

It is found in the secreted. Functionally, antimicrobial peptide. Active against Gram-negative bacterium E.coli (MIC=12.5 uM) and against Gram-positive bacterium S.aureus (MIC=12.5 uM). The polypeptide is Brevinin-1OKa (Nidirana okinavana (Kampira Falls frog)).